The primary structure comprises 318 residues: Ribose-phosphate pyrophosphokinase 2 (318 aa).

96–101 (RQDKKD) contacts ATP. Residues D128, H130, D139, and D143 each contribute to the Mg(2+) site. H130 serves as a coordination point for ATP. A binding of phosphoribosylpyrophosphate region spans residues 212–227 (KDRVAILVDDMADTCG).

This sequence belongs to the ribose-phosphate pyrophosphokinase family. Homodimer. The active form is probably a hexamer composed of 3 homodimers. The cofactor is Mg(2+).

The enzyme catalyses D-ribose 5-phosphate + ATP = 5-phospho-alpha-D-ribose 1-diphosphate + AMP + H(+). Its pathway is metabolic intermediate biosynthesis; 5-phospho-alpha-D-ribose 1-diphosphate biosynthesis; 5-phospho-alpha-D-ribose 1-diphosphate from D-ribose 5-phosphate (route I): step 1/1. With respect to regulation, activated by magnesium and inorganic phosphate. Competitively or non-competitively inhibited by ADP, 2,3-bisphosphoglyceride or GDP. Catalyzes the synthesis of phosphoribosylpyrophosphate (PRPP) that is essential for nucleotide synthesis. This chain is Ribose-phosphate pyrophosphokinase 2 (Prps2), found in Mus musculus (Mouse).